Consider the following 600-residue polypeptide: Aspartate--tRNA(Asp/Asn) ligase (600 aa).

L-aspartate is bound at residue Glu181. Residues 205–208 (QQYK) are aspartate. Arg227 provides a ligand contact to L-aspartate. Residues 227–229 (RDE) and Gln236 contribute to the ATP site. His455 provides a ligand contact to L-aspartate. Glu490 lines the ATP pocket. Arg497 is an L-aspartate binding site. An ATP-binding site is contributed by 542-545 (GLDR).

The protein belongs to the class-II aminoacyl-tRNA synthetase family. Type 1 subfamily. Homodimer.

Its subcellular location is the cytoplasm. The catalysed reaction is tRNA(Asx) + L-aspartate + ATP = L-aspartyl-tRNA(Asx) + AMP + diphosphate. In terms of biological role, aspartyl-tRNA synthetase with relaxed tRNA specificity since it is able to aspartylate not only its cognate tRNA(Asp) but also tRNA(Asn). Reaction proceeds in two steps: L-aspartate is first activated by ATP to form Asp-AMP and then transferred to the acceptor end of tRNA(Asp/Asn). This Methylacidiphilum infernorum (isolate V4) (Methylokorus infernorum (strain V4)) protein is Aspartate--tRNA(Asp/Asn) ligase.